Reading from the N-terminus, the 124-residue chain is Small ribosomal subunit protein uS12 (124 aa).

Aspartate 90 bears the 3-methylthioaspartic acid mark.

This sequence belongs to the universal ribosomal protein uS12 family. In terms of assembly, part of the 30S ribosomal subunit. Contacts proteins S8 and S17. May interact with IF1 in the 30S initiation complex.

Its function is as follows. With S4 and S5 plays an important role in translational accuracy. In terms of biological role, interacts with and stabilizes bases of the 16S rRNA that are involved in tRNA selection in the A site and with the mRNA backbone. Located at the interface of the 30S and 50S subunits, it traverses the body of the 30S subunit contacting proteins on the other side and probably holding the rRNA structure together. The combined cluster of proteins S8, S12 and S17 appears to hold together the shoulder and platform of the 30S subunit. This Wolbachia sp. subsp. Drosophila simulans (strain wRi) protein is Small ribosomal subunit protein uS12.